Here is a 224-residue protein sequence, read N- to C-terminus: Endonuclease NucS (224 aa).

It belongs to the NucS endonuclease family.

It is found in the cytoplasm. Cleaves both 3' and 5' ssDNA extremities of branched DNA structures. The chain is Endonuclease NucS from Mycolicibacterium smegmatis (strain ATCC 700084 / mc(2)155) (Mycobacterium smegmatis).